We begin with the raw amino-acid sequence, 126 residues long: Histone H2B (126 aa).

A compositionally biased stretch (low complexity) spans 1–12; it reads MPEPAKSAPAAK. A disordered region spans residues 1-35; sequence MPEPAKSAPAAKKGSKKAVSKVQKKDGKKRRKSRK. N6-acetyllysine occurs at positions 6 and 13. Ser-15 carries the phosphoserine modification. N6-acetyllysine is present on residues Lys-16 and Lys-21. Ser-113 carries O-linked (GlcNAc) serine glycosylation. Residue Lys-121 forms a Glycyl lysine isopeptide (Lys-Gly) (interchain with G-Cter in ubiquitin) linkage.

The protein belongs to the histone H2B family. In terms of assembly, the nucleosome is a histone octamer containing two molecules each of H2A, H2B, H3 and H4 assembled in one H3-H4 heterotetramer and two H2A-H2B heterodimers. The octamer wraps approximately 147 bp of DNA. Post-translationally, monoubiquitination of Lys-121 by BRE1 gives a specific tag for epigenetic transcriptional activation and is also prerequisite for histone H3 'Lys-4' and 'Lys-79' methylation. In terms of processing, phosphorylated on Ser-15 during apoptosis; which facilitates apoptotic chromatin condensation. GlcNAcylation at Ser-113 promotes monoubiquitination of Lys-121. It fluctuates in response to extracellular glucose, and associates with transcribed genes. In terms of tissue distribution, expressed by the skin granular glands.

It is found in the nucleus. Its subcellular location is the secreted. The protein localises to the chromosome. In terms of biological role, core component of nucleosome. Nucleosomes wrap and compact DNA into chromatin, limiting DNA accessibility to the cellular machineries which require DNA as a template. Histones thereby play a central role in transcription regulation, DNA repair, DNA replication and chromosomal stability. DNA accessibility is regulated via a complex set of post-translational modifications of histones, also called histone code, and nucleosome remodeling. Its function is as follows. Has antibacterial activity against the Gram-negative bacteria E.coli and the Gram-positive bacteria S.aureus. This chain is Histone H2B, found in Zhangixalus schlegelii (Japanese gliding frog).